The chain runs to 319 residues: Protein sprouty homolog 1 (319 aa).

Residue methionine 1 is modified to N-acetylmethionine. The tract at residues 54-157 (TEGPSVVKRP…HRSERAIRTQ (104 aa)) is disordered. Over residues 69–79 (PRQEKHERTHE) the composition is skewed to basic and acidic residues. A compositionally biased stretch (low complexity) spans 112–131 (SRSTSTGSAASSGSNSSASS). An SPR domain is found at 183–295 (QCGKCKCGEC…CYDWIHRPGC (113 aa)).

Belongs to the sprouty family. Forms heterodimers with SPRY2. Interacts with TESK1. Interacts with CAV1 (via C-terminus).

Its subcellular location is the cytoplasm. It localises to the membrane. Its function is as follows. Inhibits fibroblast growth factor (FGF)-induced retinal lens fiber differentiation, probably by inhibiting FGF-mediated phosphorylation of ERK1/2. Inhibits TGFB-induced epithelial-to-mesenchymal transition in lens epithelial cells. The chain is Protein sprouty homolog 1 (SPRY1) from Bos taurus (Bovine).